Here is a 309-residue protein sequence, read N- to C-terminus: uncharacterized protein (309 aa).

This is an uncharacterized protein from Bacillus subtilis (strain 168).